We begin with the raw amino-acid sequence, 274 residues long: Ribose-5-phosphate isomerase (274 aa).

Belongs to the ribose 5-phosphate isomerase family.

It localises to the cytoplasm. It catalyses the reaction aldehydo-D-ribose 5-phosphate = D-ribulose 5-phosphate. The protein operates within carbohydrate degradation; pentose phosphate pathway; D-ribose 5-phosphate from D-ribulose 5-phosphate (non-oxidative stage): step 1/1. In Kluyveromyces lactis (strain ATCC 8585 / CBS 2359 / DSM 70799 / NBRC 1267 / NRRL Y-1140 / WM37) (Yeast), this protein is Ribose-5-phosphate isomerase (RKI1).